Reading from the N-terminus, the 143-residue chain is uncharacterized protein (143 aa).

The protein belongs to the SufE family.

This is an uncharacterized protein from Mycobacterium tuberculosis (strain CDC 1551 / Oshkosh).